The following is a 530-amino-acid chain: 4,4'-diapolycopene aldehyde oxidase (530 aa).

Active-site residues include glutamate 234 and cysteine 268.

The protein belongs to the aldehyde dehydrogenase family.

The enzyme catalyses all-trans-4,4'-diapolycopen-4-al + A + H2O = all-trans-4,4'-diapolycopen-4-oate + AH2 + H(+). It catalyses the reaction all-trans-4,4'-diapolycopene-4,4'-dial + 2 A + 2 H2O = all-trans-4,4'-diapolycopene-4,4'-dioate + 2 AH2 + 2 H(+). It participates in carotenoid biosynthesis. Functionally, involved in the biosynthesis of C30 carotenoids. Catalyzes the oxidation of 4,4'-diapolycopene-4,4'-dial to yield 4,4'-diapolycopene-4,4'-dioic acid. Also able to catalyze the oxidation of 4,4'-diapolycopen-4-al to yield 4,4'-diapolycopen-4-oic acid. The polypeptide is 4,4'-diapolycopene aldehyde oxidase (Methylomonas sp).